An 889-amino-acid chain; its full sequence is Coatomer subunit beta' (889 aa).

WD repeat units lie at residues 11–41 (NRSDRVKGIDFHPTEPWVLTTLYSGRVELWN), 53–83 (VTETPVRAGKFIARKNWIIVGSDDFRIRVFN), 95–125 (AHPDYIRSIAVHPTKPYVLSGSDDLTVKLWN), 138–169 (GHEHFVMCVAFNPKDPSTFASGCLDRTVKVWS), 182–214 (GQERGVNYVDYYPLPDKPYMITASDDLTIKIWD), and 226–256 (GHMSNVSFAVFHPTLPIIISGSEDGTLKIWN). A Phosphoserine modification is found at Ser326. Positions 806–889 (CGAEGLPGSS…AVPEPVEEES (84 aa)) are disordered. Residues 836–864 (DENKEAEVEDSEFKESNSEAVEAEKKEEE) are compositionally biased toward basic and acidic residues. Over residues 866–879 (PQQQQSEQQPEQGE) the composition is skewed to low complexity.

The protein belongs to the WD repeat COPB2 family. As to quaternary structure, oligomeric complex that consists of at least the alpha, beta, beta', gamma, delta, epsilon and zeta subunits. Interacts with the ESCRT-0 subunit VPS27.

It is found in the cytoplasm. Its subcellular location is the golgi apparatus membrane. The protein localises to the cytoplasmic vesicle. It localises to the COPI-coated vesicle membrane. The coatomer is a cytosolic protein complex that binds to dilysine motifs and reversibly associates with Golgi non-clathrin-coated vesicles, which further mediate biosynthetic protein transport from the ER, via the Golgi up to the trans Golgi network. Coatomer complex is required for budding from Golgi membranes, and is essential for the retrograde Golgi-to-ER transport of dilysine-tagged proteins. The polypeptide is Coatomer subunit beta' (SEC27) (Saccharomyces cerevisiae (strain ATCC 204508 / S288c) (Baker's yeast)).